The primary structure comprises 476 residues: Glutathione synthetase (476 aa).

Arg-117 contributes to the substrate binding site. Glu-137 is an ATP binding site. Residues Glu-137 and Asn-139 each contribute to the Mg(2+) site. Residues 141–144 (ISSS), 211–213 (ERN), Gln-217, and 267–270 (RAGY) each bind substrate. Residues Lys-308, 367–376 (KPQREGGGNN), Tyr-378, 400–403 (MDKI), and Glu-426 each bind ATP. Glu-371 is a binding site for Mg(2+). Arg-452 is a binding site for substrate. Residues Lys-454 and Glu-460 each coordinate ATP. 463 to 464 (VA) contacts substrate.

It belongs to the eukaryotic GSH synthase family. Homodimer. The cofactor is Mg(2+).

It catalyses the reaction gamma-L-glutamyl-L-cysteine + glycine + ATP = glutathione + ADP + phosphate + H(+). Its pathway is sulfur metabolism; glutathione biosynthesis; glutathione from L-cysteine and L-glutamate: step 2/2. This is Glutathione synthetase (gshB) from Dictyostelium discoideum (Social amoeba).